The sequence spans 695 residues: Pentatricopeptide repeat-containing protein 1, mitochondrial (695 aa).

PPR repeat units follow at residues 133–169, 170–204, 205–243, 244–278, 279–315, and 316–352; these read TQYWYFFQCKRLIKEGKLAEALDLFERQMLKEERLQP, LECNYTVLIGGCGRVGYLKKAFRLFNDMKKRDLEP, SDATYTALFNVCAESPWKDSALQSALKLRQQLQARNFQL, NLKTYHALLKVAAKCADLRLCLDVFKEIIQRGHAV, TEETFCFLLVGCIQDKKTGFRQAMQVWRQMLSLGIKP, and SRHGYNLLLEAARDCGLGDPEVASRLLLTSQEETILL. The disordered stretch occupies residues 391–416; that stretch reads QKLEGPPALPEARVTSRTQPEVETTA. 4 PPR repeats span residues 470–485, 517–551, 552–583, and 584–618; these read EGFLGKMTEHGLQPDI, DVTFFNTLIRKKSKLGDLEGAKALLPILAKKGIVP, NLRTFCNLAIGCHRPRDGMQLLADMKKSQVSP, and NIHIYSTLINAALKKLDYTYLISILKDMRQNSVPV. Residues 672-695 form a disordered region; sequence WQEFQNKPVGDQDTTDKAGGLRDG. Positions 685–695 are enriched in basic and acidic residues; the sequence is TTDKAGGLRDG.

This sequence belongs to the PTCD1 family. Associates with mitochondrial leucine tRNAs. Interacts with ELAC2.

The protein resides in the mitochondrion. It localises to the mitochondrion matrix. Mitochondrial protein implicated in negative regulation of leucine tRNA levels, as well as negative regulation of mitochondria-encoded proteins and COX activity. Also affects the 3'-processing of mitochondrial tRNAs. The protein is Pentatricopeptide repeat-containing protein 1, mitochondrial (Ptcd1) of Mus musculus (Mouse).